The primary structure comprises 231 residues: Trypsin-2 (231 aa).

The signal sequence occupies residues 1 to 4; sequence AAFA. Residues 5 to 9 constitute a propeptide, activation peptide; that stretch reads TEDDK. The 220-residue stretch at 10–229 folds into the Peptidase S1 domain; sequence IVGGYECKAY…FNDWLTSTMA (220 aa). Disulfide bonds link Cys16–Cys145, Cys34–Cys50, Cys118–Cys218, Cys125–Cys191, Cys156–Cys170, and Cys181–Cys205. The Charge relay system role is filled by His49. Ca(2+)-binding residues include Glu61, Asn63, Val66, and Glu71. Residue Asp93 is the Charge relay system of the active site. Ser185 functions as the Charge relay system in the catalytic mechanism.

This sequence belongs to the peptidase S1 family. Ca(2+) serves as cofactor.

The protein localises to the secreted. It is found in the extracellular space. It catalyses the reaction Preferential cleavage: Arg-|-Xaa, Lys-|-Xaa.. The polypeptide is Trypsin-2 (Salmo salar (Atlantic salmon)).